A 507-amino-acid polypeptide reads, in one-letter code: Probable cytosol aminopeptidase (507 aa).

Mn(2+)-binding residues include K275 and D280. The active site involves K287. The Mn(2+) site is built by D298, D357, and E359. Residue R361 is part of the active site.

Belongs to the peptidase M17 family. Mn(2+) is required as a cofactor.

The protein resides in the cytoplasm. It carries out the reaction Release of an N-terminal amino acid, Xaa-|-Yaa-, in which Xaa is preferably Leu, but may be other amino acids including Pro although not Arg or Lys, and Yaa may be Pro. Amino acid amides and methyl esters are also readily hydrolyzed, but rates on arylamides are exceedingly low.. The catalysed reaction is Release of an N-terminal amino acid, preferentially leucine, but not glutamic or aspartic acids.. Functionally, presumably involved in the processing and regular turnover of intracellular proteins. Catalyzes the removal of unsubstituted N-terminal amino acids from various peptides. The chain is Probable cytosol aminopeptidase from Acidobacterium capsulatum (strain ATCC 51196 / DSM 11244 / BCRC 80197 / JCM 7670 / NBRC 15755 / NCIMB 13165 / 161).